We begin with the raw amino-acid sequence, 200 residues long: Holliday junction resolvase RecU (200 aa).

Mg(2+) contacts are provided by Thr-82, Asp-84, Glu-97, and Gln-116.

This sequence belongs to the RecU family. It depends on Mg(2+) as a cofactor.

It localises to the cytoplasm. The catalysed reaction is Endonucleolytic cleavage at a junction such as a reciprocal single-stranded crossover between two homologous DNA duplexes (Holliday junction).. In terms of biological role, endonuclease that resolves Holliday junction intermediates in genetic recombination. Cleaves mobile four-strand junctions by introducing symmetrical nicks in paired strands. Promotes annealing of linear ssDNA with homologous dsDNA. Required for DNA repair, homologous recombination and chromosome segregation. The protein is Holliday junction resolvase RecU of Streptococcus sanguinis (strain SK36).